Reading from the N-terminus, the 358-residue chain is Ornithine cyclodeaminase (358 aa).

L-ornithine contacts are provided by Arg-52 and Lys-76. Residues Thr-91, Arg-119, 146–147, Asp-168, Thr-208, 231–234, Lys-238, and Ser-299 each bind NAD(+); these read AQ and VGGD. Residue Arg-119 participates in L-ornithine binding. Residue Asp-234 participates in L-ornithine binding. The active-site Proton donor/acceptor is Asp-234. Val-300 contributes to the L-ornithine binding site.

This sequence belongs to the ornithine cyclodeaminase/mu-crystallin family. NAD(+) is required as a cofactor.

It catalyses the reaction L-ornithine = L-proline + NH4(+). The protein operates within amino-acid biosynthesis; L-proline biosynthesis; L-proline from L-ornithine: step 1/1. In terms of biological role, catalyzes the conversion of L-ornithine into L-proline with release of ammonia. The protein is Ornithine cyclodeaminase of Brucella suis biovar 1 (strain 1330).